The sequence spans 124 residues: Small ribosomal subunit protein uS13 (124 aa).

The interval L96–K124 is disordered.

The protein belongs to the universal ribosomal protein uS13 family. In terms of assembly, part of the 30S ribosomal subunit. Forms a loose heterodimer with protein S19. Forms two bridges to the 50S subunit in the 70S ribosome.

Located at the top of the head of the 30S subunit, it contacts several helices of the 16S rRNA. In the 70S ribosome it contacts the 23S rRNA (bridge B1a) and protein L5 of the 50S subunit (bridge B1b), connecting the 2 subunits; these bridges are implicated in subunit movement. Contacts the tRNAs in the A and P-sites. The polypeptide is Small ribosomal subunit protein uS13 (Symbiobacterium thermophilum (strain DSM 24528 / JCM 14929 / IAM 14863 / T)).